The sequence spans 83 residues: Cytochrome b559 subunit alpha (83 aa).

The helical transmembrane segment at 21 to 35 (VIHSITIPSLFIAGW) threads the bilayer. His-23 contributes to the heme binding site.

This sequence belongs to the PsbE/PsbF family. Heterodimer of an alpha subunit and a beta subunit. PSII is composed of 1 copy each of membrane proteins PsbA, PsbB, PsbC, PsbD, PsbE, PsbF, PsbH, PsbI, PsbJ, PsbK, PsbL, PsbM, PsbT, PsbX, PsbY, PsbZ, Psb30/Ycf12, at least 3 peripheral proteins of the oxygen-evolving complex and a large number of cofactors. It forms dimeric complexes. Heme b is required as a cofactor.

Its subcellular location is the plastid. The protein localises to the chloroplast thylakoid membrane. This b-type cytochrome is tightly associated with the reaction center of photosystem II (PSII). PSII is a light-driven water:plastoquinone oxidoreductase that uses light energy to abstract electrons from H(2)O, generating O(2) and a proton gradient subsequently used for ATP formation. It consists of a core antenna complex that captures photons, and an electron transfer chain that converts photonic excitation into a charge separation. The protein is Cytochrome b559 subunit alpha of Ginkgo biloba (Ginkgo).